The chain runs to 376 residues: RING-H2 finger protein ATL46 (376 aa).

The chain crosses the membrane as a helical span at residues 45-65 (VLFVIVILAVLFFISGLLHLL). The RING-type; atypical zinc finger occupies 143–185 (CAVCLCEFSEKDKLRLLPMCSHAFHLNCIDTWLQSNSTCPLCR). Composition is skewed to basic and acidic residues over residues 296–305 (RLKPQDKESE) and 358–376 (DLPK…NDGR). Disordered stretches follow at residues 296 to 320 (RLKP…KINT) and 341 to 376 (FSSD…NDGR).

It belongs to the RING-type zinc finger family. ATL subfamily.

It localises to the membrane. It catalyses the reaction S-ubiquitinyl-[E2 ubiquitin-conjugating enzyme]-L-cysteine + [acceptor protein]-L-lysine = [E2 ubiquitin-conjugating enzyme]-L-cysteine + N(6)-ubiquitinyl-[acceptor protein]-L-lysine.. Its pathway is protein modification; protein ubiquitination. The chain is RING-H2 finger protein ATL46 (ATL46) from Arabidopsis thaliana (Mouse-ear cress).